Consider the following 366-residue polypeptide: UDP-N-acetylglucosamine--N-acetylmuramyl-(pentapeptide) pyrophosphoryl-undecaprenol N-acetylglucosamine transferase (366 aa).

Residues 10–12, asparagine 124, arginine 165, serine 195, isoleucine 250, and glutamine 295 contribute to the UDP-N-acetyl-alpha-D-glucosamine site; that span reads TGG.

It belongs to the glycosyltransferase 28 family. MurG subfamily.

It localises to the cell inner membrane. The enzyme catalyses di-trans,octa-cis-undecaprenyl diphospho-N-acetyl-alpha-D-muramoyl-L-alanyl-D-glutamyl-meso-2,6-diaminopimeloyl-D-alanyl-D-alanine + UDP-N-acetyl-alpha-D-glucosamine = di-trans,octa-cis-undecaprenyl diphospho-[N-acetyl-alpha-D-glucosaminyl-(1-&gt;4)]-N-acetyl-alpha-D-muramoyl-L-alanyl-D-glutamyl-meso-2,6-diaminopimeloyl-D-alanyl-D-alanine + UDP + H(+). The protein operates within cell wall biogenesis; peptidoglycan biosynthesis. Cell wall formation. Catalyzes the transfer of a GlcNAc subunit on undecaprenyl-pyrophosphoryl-MurNAc-pentapeptide (lipid intermediate I) to form undecaprenyl-pyrophosphoryl-MurNAc-(pentapeptide)GlcNAc (lipid intermediate II). The protein is UDP-N-acetylglucosamine--N-acetylmuramyl-(pentapeptide) pyrophosphoryl-undecaprenol N-acetylglucosamine transferase of Thermodesulfovibrio yellowstonii (strain ATCC 51303 / DSM 11347 / YP87).